Here is a 420-residue protein sequence, read N- to C-terminus: Trophoblast glycoprotein (420 aa).

Positions 1-34 (MPGGCSRGPAAGDGRLRLARLALVLLGWVSSSSS) are cleaved as a signal peptide. Over 35–355 (TSSASSSSSS…PILPPSLQTS (321 aa)) the chain is Extracellular. Residues 53 to 91 (SAQPPLPDQCPALCECSEAARTVKCVNRNLTEVPTDLPL) form the LRRNT domain. 2 cysteine pairs are disulfide-bonded: C62/C68 and C66/C77. N-linked (GlcNAc...) asparagine glycosylation occurs at N81. LRR repeat units follow at residues 92–113 (YVRN…AFAR), 116–139 (PLAE…GAFE), 141–163 (LPSL…FAFS), 172–204 (PSPL…AALV), 209–232 (LQGL…VLAQ), 233–255 (LPSL…VSFR), and 256–275 (NLTH…VLHN). N124 carries an N-linked (GlcNAc...) asparagine glycan. N-linked (GlcNAc...) asparagine glycosylation is present at N275. Residues 283 to 346 (GLPHVRVFLD…LNSADLDCDP (64 aa)) enclose the LRRCT domain. 2 disulfide bridges follow: C298-C323 and C300-C344. A helical membrane pass occupies residues 356–376 (YVFLGIVLALIGAIFLLVLYL). Residues 377–420 (NRKGIKKWMHNIRDACRDHMEGYHYRYEINADPRLTNLSSNSDV) are Cytoplasmic-facing. Phosphoserine is present on S418.

In terms of processing, highly glycosylated.

The protein localises to the cell membrane. Its function is as follows. May function as an inhibitor of Wnt/beta-catenin signaling by indirectly interacting with LRP6 and blocking Wnt3a-dependent LRP6 internalization. The chain is Trophoblast glycoprotein (TPBG) from Macaca fascicularis (Crab-eating macaque).